The following is a 147-amino-acid chain: Hordoindoline-B1 (147 aa).

The signal sequence occupies residues 1 to 19; the sequence is MKTLFLLAILALVASTTFA. Positions 20–28 are excised as a propeptide; it reads QYSVGGGYN.

In terms of processing, five disulfide bonds are present. As to expression, found in endosperm and aleurone layer of developing kernels, but not in the embryo.

It is found in the membrane. Its subcellular location is the secreted. The protein localises to the extracellular space. Acts as a membranotoxin, probably through its antibacterial and antifungal activities, contributing to the defense mechanism of the plant against predators. Forms monovalent cation-selective ion channels in membranes. Contributes to grain texture and hardness. This chain is Hordoindoline-B1 (HINB-1), found in Hordeum vulgare (Barley).